Consider the following 760-residue polypeptide: 5-methyltetrahydropteroyltriglutamate--homocysteine methyltransferase (760 aa).

5-methyltetrahydropteroyltri-L-glutamate contacts are provided by residues 17–20 and Lys118; that span reads RELK. L-homocysteine contacts are provided by residues 436–438 and Glu489; that span reads IGS. Residues 436–438 and Glu489 contribute to the L-methionine site; that span reads IGS. 5-methyltetrahydropteroyltri-L-glutamate is bound by residues 520 to 521 and Trp566; that span reads RC. Asp604 provides a ligand contact to L-homocysteine. Asp604 contacts L-methionine. Glu610 is a binding site for 5-methyltetrahydropteroyltri-L-glutamate. Zn(2+) is bound by residues His646, Cys648, and Glu670. The active-site Proton donor is the His699. Cys731 serves as a coordination point for Zn(2+).

The protein belongs to the vitamin-B12 independent methionine synthase family. Zn(2+) is required as a cofactor.

The enzyme catalyses 5-methyltetrahydropteroyltri-L-glutamate + L-homocysteine = tetrahydropteroyltri-L-glutamate + L-methionine. It participates in amino-acid biosynthesis; L-methionine biosynthesis via de novo pathway; L-methionine from L-homocysteine (MetE route): step 1/1. Its function is as follows. Catalyzes the transfer of a methyl group from 5-methyltetrahydrofolate to homocysteine resulting in methionine formation. This Vibrio harveyi (Beneckea harveyi) protein is 5-methyltetrahydropteroyltriglutamate--homocysteine methyltransferase.